The following is a 665-amino-acid chain: ELMO family protein LMO1 (665 aa).

In terms of assembly, forms an active heterodimer with DCK1.

Its subcellular location is the cytoplasm. It is found in the mitochondrion. In terms of biological role, forms a transiant heterodimeric complex with DCK1, that acts as a guanine nucleotide exchange factor (GEF) for the small GTPase RHO5. DCK1, LMO1 and RHO5 relocate to mitochondria upon oxidative stress and trigger cell death. The DCK1/LMO1/RHO5 signaling module mediates mitochondrial turnover under nitrogen starvation conditions via mitophagy. The DCK1/LMO1/RHO5 signaling module also plays a role in cell wall integrity signaling. The chain is ELMO family protein LMO1 from Saccharomyces cerevisiae (strain ATCC 204508 / S288c) (Baker's yeast).